Reading from the N-terminus, the 649-residue chain is DNA ligase (649 aa).

NAD(+) contacts are provided by residues aspartate 62 to aspartate 66 and serine 104 to threonine 105. The N6-AMP-lysine intermediate role is filled by lysine 142. Residues arginine 158, glutamate 189, and lysine 301 each contribute to the NAD(+) site. Zn(2+)-binding residues include cysteine 389, cysteine 392, cysteine 405, and cysteine 411. Positions proline 569–tyrosine 649 constitute a BRCT domain.

The protein belongs to the NAD-dependent DNA ligase family. LigA subfamily. Mg(2+) is required as a cofactor. Mn(2+) serves as cofactor.

It carries out the reaction NAD(+) + (deoxyribonucleotide)n-3'-hydroxyl + 5'-phospho-(deoxyribonucleotide)m = (deoxyribonucleotide)n+m + AMP + beta-nicotinamide D-nucleotide.. Functionally, DNA ligase that catalyzes the formation of phosphodiester linkages between 5'-phosphoryl and 3'-hydroxyl groups in double-stranded DNA using NAD as a coenzyme and as the energy source for the reaction. It is essential for DNA replication and repair of damaged DNA. The polypeptide is DNA ligase (Psychromonas ingrahamii (strain DSM 17664 / CCUG 51855 / 37)).